We begin with the raw amino-acid sequence, 1319 residues long: ERAD-associated E3 ubiquitin-protein ligase DOA10 (1319 aa).

N-acetylmethionine is present on methionine 1. Topologically, residues 1–131 (MDVDSDVNVS…LTFFEKARLA (131 aa)) are cytoplasmic. The segment at 31-100 (DDAPSGATCR…DICHYPIQFK (70 aa)) adopts an RING-CH-type zinc-finger fold. Zn(2+) is bound by residues cysteine 39, cysteine 42, cysteine 56, cysteine 58, histidine 66, cysteine 69, cysteine 90, and cysteine 93. Residues 132–152 (LTIGLAAVLYIIGVPLVWNMF) traverse the membrane as a helical segment. At 153-203 (GKLYTMMLDGSSPYPGDFLKSLIYGYDQSATPELTTRAIFYQLLQNHSFTS) the chain is on the lumenal side. The chain crosses the membrane as a helical span at residues 204–224 (LQFIMIVILHIALYFQYDMIV). The Cytoplasmic segment spans residues 225-468 (REDVFSKMVF…GPLVINLKLK (244 aa)). Over residues 291 to 306 (ADNNNNVINPRNDNVP) the composition is skewed to low complexity. Disordered stretches follow at residues 291–315 (ADNN…DHRN) and 329–381 (EATE…EADY). The chain crosses the membrane as a helical span at residues 469-489 (LLNVIAYFIIAVVFTAIYLAI). Over 490-491 (SY) the chain is Lumenal. A helical transmembrane segment spans residues 492 to 512 (LFPTFIGFGLLKIYFGIFKVI). The Cytoplasmic portion of the chain corresponds to 513–626 (LRGLCHLYYL…LFALKCTFKV (114 aa)). The chain crosses the membrane as a helical span at residues 627–647 (FTLFFIELAGFPILAGVMLDF). Residues 648 to 660 (SLFCPILASNSRM) are Lumenal-facing. Residues 661-681 (LWVPSICAIWPPFSLFVYWTI) form a helical membrane-spanning segment. At 682-739 (GTLYMYWFAKYIGMIRKNIIRPGVLFFIRSPEDPNIKILHDSLIHPMSIQLSRLCLSM) the chain is on the cytoplasmic side. A helical transmembrane segment spans residues 740–760 (FIYAIFIVLGFGFHTRIFFPF). The Lumenal segment spans residues 761–777 (MLKSNLLSVPEAYKPTS). A helical transmembrane segment spans residues 778–797 (IISWKFNTILLTLYFTKRIL). Topologically, residues 798–965 (ESSSYVKPLL…YVPPDFRLRY (168 aa)) are cytoplasmic. Residues 966 to 986 (MTLLGLVWLFASILMLGVTFI) traverse the membrane as a helical segment. The Lumenal segment spans residues 987 to 1019 (SQALINFVCSFGFLPVVKLLLGERNKVYVAWKE). The helical transmembrane segment at 1020-1040 (LSDISYSYLNIYYVCVGSVCL) threads the bilayer. Over 1041–1113 (SKIAKDILHF…IFDSMLVKYN (73 aa)) the chain is Cytoplasmic. A helical membrane pass occupies residues 1114–1134 (LMVFIAIMIAVIRTMVSWVVL). The Lumenal segment spans residues 1135-1168 (TDGILACYNYLTIRVFGNSSYTIGNSKWFKYDES). A helical membrane pass occupies residues 1169 to 1189 (LLFVVWIISSMVNFGTGYKSL). Residues 1190 to 1213 (KLFFRNRNTSKLNFLKTMALELFK) are Cytoplasmic-facing. A helical membrane pass occupies residues 1214–1234 (QGFLHMVIYVLPIIILSLVFL). Residues 1235 to 1270 (RDVSTKQIIDISHGSRSFTLSLNESFPTWTRMQDIY) are Lumenal-facing. The helical transmembrane segment at 1271–1291 (FGLLIALESFTFFFQATVLFI) threads the bilayer. Residues 1292–1319 (QWFKSTVQNVKDEVYTKGRALENLPDES) are Cytoplasmic-facing.

This sequence belongs to the DOA10/MARCH6 family. Component of the DOA10 ubiquitin ligase complex which contains E3 ligase SSM4/DOA10 and CDC48-binding protein UBX2/SEL1. The DOA10 complex interacts with the heterotrimeric CDC48-NPL4-UFD1 ATPase complex which is recruited by UBX2/SEL1 via its interaction with CDC48. Interacts with its associated ubiquitin conjugating enzymes UBC6 and UBC7 with its membrane anchor CUE1. Interacts with PEX29.

It is found in the endoplasmic reticulum membrane. It localises to the nucleus inner membrane. It catalyses the reaction S-ubiquitinyl-[E2 ubiquitin-conjugating enzyme]-L-cysteine + [acceptor protein]-L-lysine = [E2 ubiquitin-conjugating enzyme]-L-cysteine + N(6)-ubiquitinyl-[acceptor protein]-L-lysine.. The protein operates within protein modification; protein ubiquitination. Functionally, E3 ubiquitin-protein ligase which accepts ubiquitin specifically from endoplasmic reticulum-associated UBC6 and UBC7 E2 ligases, and transfers it to substrates promoting their degradation. Mediates the degradation of a broad range of substrates, including endoplasmic reticulum membrane proteins (ERQC), soluble nuclear proteins and soluble cytoplasmic proteins (CytoQC). Component of the DOA10 ubiquitin ligase complex, which is part of the ERAD-C pathway responsible for the rapid degradation of membrane proteins with misfolded cytoplasmic domains. ERAD-C substrates are ubiquitinated through DOA10 in conjunction with the E2 ubiquitin-conjugating enzymes UBC6 and UBC7-CUE1. Ubiquitinated substrates are then removed to the cytosol via the action of the UFD1-NPL4-CDC48/p97 (UNC) AAA ATPase complex and targeted to the proteasome. Also recognizes the N-terminally acetylated residue of proteins as degradation signal (degron). N-terminally acetylated target proteins include MATALPHA2, TBF1, SLK19, YMR090W, HIS3, HSP104, UBP6 and ARO8. Catalyzes ubiquitination of mislocalized tail-anchored proteins that are extracted from the mitochondrion membrane by MSP1: following extraction, mistargeted proteins are transferred to the endoplasmic reticulum, where they are ubiquitinated by DOA10 and degraded by the proteasome. The sequence is that of ERAD-associated E3 ubiquitin-protein ligase DOA10 (SSM4) from Saccharomyces cerevisiae (strain ATCC 204508 / S288c) (Baker's yeast).